Reading from the N-terminus, the 291-residue chain is 33 kDa chaperonin (291 aa).

2 disulfides stabilise this stretch: Cys237/Cys239 and Cys270/Cys273.

The protein belongs to the HSP33 family. In terms of processing, under oxidizing conditions two disulfide bonds are formed involving the reactive cysteines. Under reducing conditions zinc is bound to the reactive cysteines and the protein is inactive.

The protein localises to the cytoplasm. Functionally, redox regulated molecular chaperone. Protects both thermally unfolding and oxidatively damaged proteins from irreversible aggregation. Plays an important role in the bacterial defense system toward oxidative stress. This Halalkalibacterium halodurans (strain ATCC BAA-125 / DSM 18197 / FERM 7344 / JCM 9153 / C-125) (Bacillus halodurans) protein is 33 kDa chaperonin.